A 743-amino-acid chain; its full sequence is Beta-galactosidase (743 aa).

Glu-388 serves as the catalytic Proton donor. The Nucleophile role is filled by Glu-453.

It belongs to the glycosyl hydrolase 2 family. Homodimer.

It catalyses the reaction Hydrolysis of terminal non-reducing beta-D-galactose residues in beta-D-galactosides.. Functionally, beta-galactosidase. This chain is Beta-galactosidase (lacZ), found in Thermoanaerobacter pseudethanolicus (strain ATCC 33223 / 39E) (Clostridium thermohydrosulfuricum).